A 337-amino-acid chain; its full sequence is DNA-directed RNA polymerase subunit alpha (337 aa).

The alpha N-terminal domain (alpha-NTD) stretch occupies residues 1–226 (MLIAQRPTLT…ELFGLARELN (226 aa)). The segment at 243–337 (LAADLALEIE…DTSFAEDEQL (95 aa)) is alpha C-terminal domain (alpha-CTD). Residues 315–337 (FDPSAVVNDFEDDDTSFAEDEQL) are disordered. The segment covering 323–337 (DFEDDDTSFAEDEQL) has biased composition (acidic residues).

This sequence belongs to the RNA polymerase alpha chain family. As to quaternary structure, homodimer. The RNAP catalytic core consists of 2 alpha, 1 beta, 1 beta' and 1 omega subunit. When a sigma factor is associated with the core the holoenzyme is formed, which can initiate transcription.

The enzyme catalyses RNA(n) + a ribonucleoside 5'-triphosphate = RNA(n+1) + diphosphate. DNA-dependent RNA polymerase catalyzes the transcription of DNA into RNA using the four ribonucleoside triphosphates as substrates. This chain is DNA-directed RNA polymerase subunit alpha, found in Kineococcus radiotolerans (strain ATCC BAA-149 / DSM 14245 / SRS30216).